A 328-amino-acid chain; its full sequence is Homeobox protein DLX-2 (328 aa).

Composition is skewed to polar residues over residues glutamine 16–glutamine 28 and glutamate 52–histidine 72. 3 disordered regions span residues glutamine 16–glycine 81, tryptophan 211–serine 270, and leucine 300–phenylalanine 328. A DNA-binding region (homeobox) is located at residues valine 152 to tryptophan 211. Serine 232 carries the phosphoserine modification. A compositionally biased stretch (gly residues) spans alanine 250–serine 264.

The protein belongs to the distal-less homeobox family. As to quaternary structure, interacts (via homeobox DNA-binding domain) with POU4F2; this interaction enhances retinal ganglion cell (RGC) differentiation.

It is found in the nucleus. Its function is as follows. Acts as a transcriptional activator. Activates transcription of CGA/alpha-GSU, via binding to the downstream activin regulatory element (DARE) in the gene promoter. Plays a role in terminal differentiation of interneurons, such as amacrine and bipolar cells in the developing retina. Likely to play a regulatory role in the development of the ventral forebrain. May play a role in craniofacial patterning and morphogenesis. The sequence is that of Homeobox protein DLX-2 (DLX2) from Homo sapiens (Human).